We begin with the raw amino-acid sequence, 134 residues long: DNA-directed RNA polymerase subunit omega (134 aa).

Positions 76 to 102 are disordered; it reads EVDEPEPDPASMIAAGGAAAADSEEQD.

This sequence belongs to the RNA polymerase subunit omega family. In terms of assembly, the RNAP catalytic core consists of 2 alpha, 1 beta, 1 beta' and 1 omega subunit. When a sigma factor is associated with the core the holoenzyme is formed, which can initiate transcription.

It carries out the reaction RNA(n) + a ribonucleoside 5'-triphosphate = RNA(n+1) + diphosphate. Its function is as follows. Promotes RNA polymerase assembly. Latches the N- and C-terminal regions of the beta' subunit thereby facilitating its interaction with the beta and alpha subunits. This Rhizobium etli (strain ATCC 51251 / DSM 11541 / JCM 21823 / NBRC 15573 / CFN 42) protein is DNA-directed RNA polymerase subunit omega.